We begin with the raw amino-acid sequence, 292 residues long: Glycine--tRNA ligase alpha subunit (292 aa).

The protein belongs to the class-II aminoacyl-tRNA synthetase family. As to quaternary structure, tetramer of two alpha and two beta subunits.

It is found in the cytoplasm. It carries out the reaction tRNA(Gly) + glycine + ATP = glycyl-tRNA(Gly) + AMP + diphosphate. The sequence is that of Glycine--tRNA ligase alpha subunit from Syntrophus aciditrophicus (strain SB).